Here is a 131-residue protein sequence, read N- to C-terminus: MSTETDEILERLKKITLLEAYELVKQIENTFGVDATIALSASNTNPSILPSKADETVVEEKTEFDVIIQEVPSAKRINVIKTVRSLTTLGLKEAKDLIESVPKVVCEAVSKEVAEETKKLLEEAGASIIIK.

The protein belongs to the bacterial ribosomal protein bL12 family. Homodimer. Part of the ribosomal stalk of the 50S ribosomal subunit. Forms a multimeric L10(L12)X complex, where L10 forms an elongated spine to which 2 to 4 L12 dimers bind in a sequential fashion. Binds GTP-bound translation factors.

The protein localises to the plastid. It is found in the chloroplast. In terms of biological role, forms part of the ribosomal stalk which helps the ribosome interact with GTP-bound translation factors. Is thus essential for accurate translation. This is Large ribosomal subunit protein bL12c from Euglena gracilis.